The sequence spans 275 residues: L-aspartate dehydrogenase (275 aa).

Residues Ala130 and Asn196 each coordinate NAD(+). His226 is an active-site residue.

The protein belongs to the L-aspartate dehydrogenase family.

It carries out the reaction L-aspartate + NADP(+) + H2O = oxaloacetate + NH4(+) + NADPH + H(+). It catalyses the reaction L-aspartate + NAD(+) + H2O = oxaloacetate + NH4(+) + NADH + H(+). It participates in cofactor biosynthesis; NAD(+) biosynthesis; iminoaspartate from L-aspartate (dehydrogenase route): step 1/1. In terms of biological role, specifically catalyzes the NAD or NADP-dependent dehydrogenation of L-aspartate to iminoaspartate. The protein is L-aspartate dehydrogenase of Ruegeria pomeroyi (strain ATCC 700808 / DSM 15171 / DSS-3) (Silicibacter pomeroyi).